A 149-amino-acid chain; its full sequence is Ribonuclease pancreatic (149 aa).

A signal peptide spans 1–25 (MGLEKSLILLPLLVLVLAWVQPSLG). Substrate contacts are provided by K32 and R35. H37 functions as the Proton acceptor in the catalytic mechanism. Disulfide bonds link C51–C109, C65–C120, C83–C135, and C90–C97. 66-70 (KRVNT) serves as a coordination point for substrate. Residue N87 is glycosylated (N-linked (GlcNAc...) asparagine). Residues K91 and R110 each contribute to the substrate site. The active-site Proton donor is the H144.

The protein belongs to the pancreatic ribonuclease family. As to quaternary structure, monomer. Interacts with and forms tight 1:1 complexes with RNH1. Dimerization of two such complexes may occur. Interaction with RNH1 inhibits this protein. In terms of tissue distribution, pancreas.

It localises to the secreted. It catalyses the reaction an [RNA] containing cytidine + H2O = an [RNA]-3'-cytidine-3'-phosphate + a 5'-hydroxy-ribonucleotide-3'-[RNA].. The catalysed reaction is an [RNA] containing uridine + H2O = an [RNA]-3'-uridine-3'-phosphate + a 5'-hydroxy-ribonucleotide-3'-[RNA].. Its function is as follows. Endonuclease that catalyzes the cleavage of RNA on the 3' side of pyrimidine nucleotides. Acts on single-stranded and double-stranded RNA. In Acomys cahirinus (Cairo spiny mouse), this protein is Ribonuclease pancreatic (RNASE1).